The chain runs to 312 residues: Ribosomal protein L11 methyltransferase (312 aa).

Residues threonine 162, glycine 183, aspartate 205, and asparagine 248 each contribute to the S-adenosyl-L-methionine site.

Belongs to the methyltransferase superfamily. PrmA family.

It is found in the cytoplasm. The enzyme catalyses L-lysyl-[protein] + 3 S-adenosyl-L-methionine = N(6),N(6),N(6)-trimethyl-L-lysyl-[protein] + 3 S-adenosyl-L-homocysteine + 3 H(+). Its function is as follows. Methylates ribosomal protein L11. In Bacillus cytotoxicus (strain DSM 22905 / CIP 110041 / 391-98 / NVH 391-98), this protein is Ribosomal protein L11 methyltransferase.